Here is a 543-residue protein sequence, read N- to C-terminus: Carotenoid 9,10(9',10')-cleavage dioxygenase 1 (543 aa).

Fe cation contacts are provided by histidine 224, histidine 272, histidine 338, and histidine 528.

It belongs to the carotenoid oxygenase family. As to quaternary structure, homodimer. Requires Fe(2+) as cofactor.

It carries out the reaction all-trans-zeaxanthin + 2 O2 = 4,9-dimethyldodeca-2,4,6,8,10-pentaenedial + 2 (3R)-hydroxy-beta-ionone. Functionally, cleaves a variety of carotenoids at the 9-10 and 9'-10' double bonds. Probably not involved in abscisic acid biosynthesis. In Phaseolus vulgaris (Kidney bean), this protein is Carotenoid 9,10(9',10')-cleavage dioxygenase 1 (CCD1).